A 199-amino-acid polypeptide reads, in one-letter code: Interleukin-11 (199 aa).

The N-terminal stretch at 1–21 (MNCVCRLVLVVLSLWPDTAVA) is a signal peptide. Residues 182 to 190 (HLTLDWAVR) form an important for interaction with IL11RA and for the stimulation of cell proliferation region.

The protein belongs to the IL-6 superfamily. As to quaternary structure, interacts with IL11RA to associate with IL6ST, giving rise to a multimeric signaling complex.

The protein resides in the secreted. Functionally, cytokine that stimulates the proliferation of hematopoietic stem cells and megakaryocyte progenitor cells and induces megakaryocyte maturation resulting in increased platelet production. Also promotes the proliferation of hepatocytes in response to liver damage. Binding to its receptor formed by IL6ST and IL11RA activates a signaling cascade that promotes cell proliferation. Signaling leads to the activation of intracellular protein kinases and the phosphorylation of STAT3. The interaction with the membrane-bound IL11RA and IL6ST stimulates 'classic signaling', whereas the binding of IL11 and soluble IL11RA to IL6ST stimulates 'trans-signaling'. The sequence is that of Interleukin-11 from Homo sapiens (Human).